The following is a 314-amino-acid chain: Mycothiol acetyltransferase (314 aa).

E39 is a binding site for 1D-myo-inositol 2-(L-cysteinylamino)-2-deoxy-alpha-D-glucopyranoside. 80 to 82 (LTA) contacts acetyl-CoA. The N-acetyltransferase domain maps to 159-313 (FVCRRFDPIS…PTGELGHEPP (155 aa)). E186, K228, and E237 together coordinate 1D-myo-inositol 2-(L-cysteinylamino)-2-deoxy-alpha-D-glucopyranoside. Residues 241-243 (LGV) and 248-254 (QGQGVGR) each bind acetyl-CoA. 1D-myo-inositol 2-(L-cysteinylamino)-2-deoxy-alpha-D-glucopyranoside is bound at residue Y275.

This sequence belongs to the acetyltransferase family. MshD subfamily. Monomer.

The catalysed reaction is 1D-myo-inositol 2-(L-cysteinylamino)-2-deoxy-alpha-D-glucopyranoside + acetyl-CoA = mycothiol + CoA + H(+). Its function is as follows. Catalyzes the transfer of acetyl from acetyl-CoA to desacetylmycothiol (Cys-GlcN-Ins) to form mycothiol. This chain is Mycothiol acetyltransferase, found in Jonesia denitrificans (strain ATCC 14870 / DSM 20603 / BCRC 15368 / CIP 55.134 / JCM 11481 / NBRC 15587 / NCTC 10816 / Prevot 55134) (Listeria denitrificans).